The chain runs to 865 residues: LINE-1 type transposase domain-containing protein 1 (865 aa).

At Ser-2 the chain carries N-acetylserine. A Phosphoserine modification is found at Ser-2. Thr-149 is subject to Phosphothreonine. Ser-154 carries the post-translational modification Phosphoserine. Residues 370–508 (EMKNLETQEE…EKKASRRQKE (139 aa)) are disordered. Composition is skewed to acidic residues over residues 376–440 (TQEE…EQTS) and 472–483 (SVEDSESEEEEE). A phosphoserine mark is found at Ser-472, Ser-476, and Ser-478. Positions 498-508 (TEKKASRRQKE) are enriched in basic and acidic residues. A phosphoserine mark is found at Ser-518, Ser-561, and Ser-573. A compositionally biased stretch (basic and acidic residues) spans 590–608 (EEKKHRTLHTEELTSKEAD). Residues 590-612 (EEKKHRTLHTEELTSKEADLTEE) are disordered. Residues Ser-640, Ser-648, and Ser-665 each carry the phosphoserine modification. Residues 642–684 (VLEIENSVDDLSSRMDILEERIDSLEDQIEEFSKDTMQMTKQI) are a coiled coil.

Belongs to the transposase 22 family.

This chain is LINE-1 type transposase domain-containing protein 1 (L1TD1), found in Homo sapiens (Human).